The following is a 237-amino-acid chain: Phosphoribosylaminoimidazole-succinocarboxamide synthase (237 aa).

It belongs to the SAICAR synthetase family.

The enzyme catalyses 5-amino-1-(5-phospho-D-ribosyl)imidazole-4-carboxylate + L-aspartate + ATP = (2S)-2-[5-amino-1-(5-phospho-beta-D-ribosyl)imidazole-4-carboxamido]succinate + ADP + phosphate + 2 H(+). The protein operates within purine metabolism; IMP biosynthesis via de novo pathway; 5-amino-1-(5-phospho-D-ribosyl)imidazole-4-carboxamide from 5-amino-1-(5-phospho-D-ribosyl)imidazole-4-carboxylate: step 1/2. This Marinobacter nauticus (strain ATCC 700491 / DSM 11845 / VT8) (Marinobacter aquaeolei) protein is Phosphoribosylaminoimidazole-succinocarboxamide synthase.